A 310-amino-acid polypeptide reads, in one-letter code: Olfactory receptor 5P53 (310 aa).

Over 1–25 (MEAENHTTVAELIILGLTEDPKLCI) the chain is Extracellular. The N-linked (GlcNAc...) asparagine glycan is linked to asparagine 5. The helical transmembrane segment at 26 to 46 (VFFVIFLGVYIVTLVGNISII) threads the bilayer. Residues 47-54 (TLIRISSQ) are Cytoplasmic-facing. Residues 55-75 (LHTPMYLFLSHLAFVDILYST) traverse the membrane as a helical segment. Topologically, residues 76–99 (SVSVIMHMELLGHGLALPVAACAA) are extracellular. Cysteine 97 and cysteine 189 are joined by a disulfide. A helical membrane pass occupies residues 100-120 (QLCITVSFGSAECFLLAAMAY). The Cytoplasmic segment spans residues 121 to 133 (DRYVAICSPLLYS). A helical transmembrane segment spans residues 134–154 (TLMSPRVCFLLLGMSYVGGCM). The Extracellular segment spans residues 155-196 (NGWTFTGCLLSLSFCGPNQIDHFFCDFSPLLKLSCSDVSIIG). The chain crosses the membrane as a helical span at residues 197-217 (IIPSISSGSIIVVTVFVIAVS). Over 218-237 (YIYILITILNMRSTEGRHKA) the chain is Cytoplasmic. A helical membrane pass occupies residues 238 to 258 (FSTCTSHLTAVTLYYGTITFI). The Extracellular segment spans residues 259-271 (YVMPKSNYSTEQN). An N-linked (GlcNAc...) asparagine glycan is attached at asparagine 265. A helical membrane pass occupies residues 272–292 (KVLSVFYTVVIPMLNPLIYSL). Topologically, residues 293-310 (RNRDVKEALRKATVRVYS) are cytoplasmic.

Belongs to the G-protein coupled receptor 1 family.

The protein resides in the cell membrane. Functionally, potential odorant receptor. The protein is Olfactory receptor 5P53 of Mus musculus (Mouse).